A 315-amino-acid polypeptide reads, in one-letter code: Porphobilinogen deaminase (315 aa).

An S-(dipyrrolylmethanemethyl)cysteine modification is found at C234.

The protein belongs to the HMBS family. In terms of assembly, monomer. Dipyrromethane is required as a cofactor.

The catalysed reaction is 4 porphobilinogen + H2O = hydroxymethylbilane + 4 NH4(+). It functions in the pathway porphyrin-containing compound metabolism; protoporphyrin-IX biosynthesis; coproporphyrinogen-III from 5-aminolevulinate: step 2/4. Tetrapolymerization of the monopyrrole PBG into the hydroxymethylbilane pre-uroporphyrinogen in several discrete steps. This is Porphobilinogen deaminase from Mycobacterium avium (strain 104).